The primary structure comprises 291 residues: GTPase Era (291 aa).

Residues 2 to 167 enclose the Era-type G domain; the sequence is KSGFVSIIGR…LDEIVKYLDE (166 aa). The tract at residues 10–17 is G1; sequence GRTNAGKS. 10–17 is a GTP binding site; sequence GRTNAGKS. The interval 36–40 is G2; the sequence is NATRR. The interval 57–60 is G3; sequence DTPG. Residues 57 to 61 and 116 to 119 contribute to the GTP site; these read DTPGL and NKVD. A G4 region spans residues 116–119; the sequence is NKVD. The interval 146–148 is G5; the sequence is YSS. A KH type-2 domain is found at 186–274; the sequence is YRDFILESIY…LLKLFVTVKK (89 aa).

It belongs to the TRAFAC class TrmE-Era-EngA-EngB-Septin-like GTPase superfamily. Era GTPase family. In terms of assembly, monomer.

It is found in the cytoplasm. The protein resides in the cell inner membrane. An essential GTPase that binds both GDP and GTP, with rapid nucleotide exchange. Plays a role in 16S rRNA processing and 30S ribosomal subunit biogenesis and possibly also in cell cycle regulation and energy metabolism. This chain is GTPase Era, found in Campylobacter jejuni (strain RM1221).